Reading from the N-terminus, the 101-residue chain is Fructose-bisphosphate aldolase (101 aa).

The active-site Schiff-base intermediate with dihydroxyacetone-P is the lysine 11.

This sequence belongs to the class I fructose-bisphosphate aldolase family.

The enzyme catalyses beta-D-fructose 1,6-bisphosphate = D-glyceraldehyde 3-phosphate + dihydroxyacetone phosphate. The protein operates within carbohydrate degradation; glycolysis; D-glyceraldehyde 3-phosphate and glycerone phosphate from D-glucose: step 4/4. The polypeptide is Fructose-bisphosphate aldolase (Lymnaea stagnalis (Great pond snail)).